We begin with the raw amino-acid sequence, 636 residues long: 1-deoxy-D-xylulose-5-phosphate synthase (636 aa).

Thiamine diphosphate contacts are provided by residues H75 and A116–S118. D147 contacts Mg(2+). Thiamine diphosphate-binding positions include G148 to A149, N177, Y288, and E370. N177 contributes to the Mg(2+) binding site.

This sequence belongs to the transketolase family. DXPS subfamily. As to quaternary structure, homodimer. It depends on Mg(2+) as a cofactor. The cofactor is thiamine diphosphate.

It catalyses the reaction D-glyceraldehyde 3-phosphate + pyruvate + H(+) = 1-deoxy-D-xylulose 5-phosphate + CO2. It participates in metabolic intermediate biosynthesis; 1-deoxy-D-xylulose 5-phosphate biosynthesis; 1-deoxy-D-xylulose 5-phosphate from D-glyceraldehyde 3-phosphate and pyruvate: step 1/1. In terms of biological role, catalyzes the acyloin condensation reaction between C atoms 2 and 3 of pyruvate and glyceraldehyde 3-phosphate to yield 1-deoxy-D-xylulose-5-phosphate (DXP). This is 1-deoxy-D-xylulose-5-phosphate synthase from Ralstonia nicotianae (strain ATCC BAA-1114 / GMI1000) (Ralstonia solanacearum).